A 100-amino-acid polypeptide reads, in one-letter code: Putative septation protein SpoVG (100 aa).

The protein belongs to the SpoVG family.

Could be involved in septation. The protein is Putative septation protein SpoVG of Staphylococcus haemolyticus (strain JCSC1435).